A 435-amino-acid polypeptide reads, in one-letter code: Probable histidine--tRNA ligase, cytoplasmic (435 aa).

This sequence belongs to the class-II aminoacyl-tRNA synthetase family.

The protein localises to the cytoplasm. It catalyses the reaction tRNA(His) + L-histidine + ATP = L-histidyl-tRNA(His) + AMP + diphosphate + H(+). The sequence is that of Probable histidine--tRNA ligase, cytoplasmic from Encephalitozoon cuniculi (strain GB-M1) (Microsporidian parasite).